Here is a 157-residue protein sequence, read N- to C-terminus: Isotocin-neurophysin IT 1 (157 aa).

Residues 1–20 (MFGTSVSALCLLFLLSVCTA) form the signal peptide. A disulfide bond links C21 and C26. G29 is subject to Glycine amide. 7 cysteine pairs are disulfide-bonded: C42/C86, C45/C59, C53/C76, C60/C66, C93/C106, C100/C118, and C107/C112.

This sequence belongs to the vasopressin/oxytocin family. Post-translationally, seven disulfide bonds are present in neurophysin.

It is found in the secreted. Its function is as follows. Isotocin causes contraction of smooth muscles. The protein is Isotocin-neurophysin IT 1 of Oncorhynchus keta (Chum salmon).